The sequence spans 218 residues: Eukaryotic translation initiation factor 3 subunit K (218 aa).

A2 bears the N-acetylalanine mark. T28 is modified (phosphothreonine). Residues 42-204 (YDLEANLAVL…SIKPKNIVEK (163 aa)) enclose the PCI domain. S217 bears the Phosphoserine mark.

Belongs to the eIF-3 subunit K family. Component of the eukaryotic translation initiation factor 3 (eIF-3) complex, which is composed of 13 subunits: EIF3A, EIF3B, EIF3C, EIF3D, EIF3E, EIF3F, EIF3G, EIF3H, EIF3I, EIF3J, EIF3K, EIF3L and EIF3M. The eIF-3 complex appears to include 3 stable modules: module A is composed of EIF3A, EIF3B, EIF3G and EIF3I; module B is composed of EIF3F, EIF3H, and EIF3M; and module C is composed of EIF3C, EIF3D, EIF3E, EIF3K and EIF3L. EIF3C of module C binds EIF3B of module A and EIF3H of module B, thereby linking the three modules. EIF3J is a labile subunit that binds to the eIF-3 complex via EIF3B. The eIF-3 complex interacts with RPS6KB1 under conditions of nutrient depletion. Mitogenic stimulation leads to binding and activation of a complex composed of MTOR and RPTOR, leading to phosphorylation and release of RPS6KB1 and binding of EIF4B to eIF-3. Identified in a HCV IRES-mediated translation complex, at least composed of EIF3C, IGF2BP1, RPS3 and HCV RNA-replicon. Interacts with ALKBH4, IFIT1 and IFIT2.

The protein resides in the nucleus. Its subcellular location is the cytoplasm. Functionally, component of the eukaryotic translation initiation factor 3 (eIF-3) complex, which is required for several steps in the initiation of protein synthesis. The eIF-3 complex associates with the 40S ribosome and facilitates the recruitment of eIF-1, eIF-1A, eIF-2:GTP:methionyl-tRNAi and eIF-5 to form the 43S pre-initiation complex (43S PIC). The eIF-3 complex stimulates mRNA recruitment to the 43S PIC and scanning of the mRNA for AUG recognition. The eIF-3 complex is also required for disassembly and recycling of post-termination ribosomal complexes and subsequently prevents premature joining of the 40S and 60S ribosomal subunits prior to initiation. The eIF-3 complex specifically targets and initiates translation of a subset of mRNAs involved in cell proliferation, including cell cycling, differentiation and apoptosis, and uses different modes of RNA stem-loop binding to exert either translational activation or repression. This Mus musculus (Mouse) protein is Eukaryotic translation initiation factor 3 subunit K (Eif3k).